Reading from the N-terminus, the 490-residue chain is Cobyric acid synthase (490 aa).

Positions Lys253–Ala440 constitute a GATase cobBQ-type domain. Cys334 (nucleophile) is an active-site residue. The active site involves His432.

It belongs to the CobB/CobQ family. CobQ subfamily.

It functions in the pathway cofactor biosynthesis; adenosylcobalamin biosynthesis. In terms of biological role, catalyzes amidations at positions B, D, E, and G on adenosylcobyrinic A,C-diamide. NH(2) groups are provided by glutamine, and one molecule of ATP is hydrogenolyzed for each amidation. The chain is Cobyric acid synthase from Chromobacterium violaceum (strain ATCC 12472 / DSM 30191 / JCM 1249 / CCUG 213 / NBRC 12614 / NCIMB 9131 / NCTC 9757 / MK).